Here is a 72-residue protein sequence, read N- to C-terminus: General transcription factor IIH subunit 5 (72 aa).

Belongs to the TFB5 family. As to quaternary structure, component of the 7-subunit TFIIH core complex composed of XPB/repB, XPD/repD, gtf2h1, gtf2h2, gtf2h3, gtf2h4 and gtf2h5, which is active in NER. The core complex associates with the 3-subunit CDK-activating kinase (CAK) module composed of cycH/cyclin H, cdk7 and mnat1 to form the 10-subunit holoenzyme (holo-TFIIH) active in transcription.

It localises to the nucleus. Functionally, component of the general transcription and DNA repair factor IIH (TFIIH) core complex, which is involved in general and transcription-coupled nucleotide excision repair (NER) of damaged DNA and, when complexed to CAK, in RNA transcription by RNA polymerase II. In NER, TFIIH acts by opening DNA around the lesion to allow the excision of the damaged oligonucleotide and its replacement by a new DNA fragment. In transcription, TFIIH has an essential role in transcription initiation. When the pre-initiation complex (PIC) has been established, TFIIH is required for promoter opening and promoter escape. Phosphorylation of the C-terminal tail (CTD) of the largest subunit of RNA polymerase II by the kinase module CAK controls the initiation of transcription. The sequence is that of General transcription factor IIH subunit 5 (gtf2h5) from Dictyostelium discoideum (Social amoeba).